Here is a 173-residue protein sequence, read N- to C-terminus: Cell division protein SepF (173 aa).

The segment at 31 to 82 (FEDFDEPLDERPSRNRSPRDDSRNNAVTDSSDHSPSRNERRSPAPAPATADL) is disordered. 2 stretches are compositionally biased toward basic and acidic residues: residues 39–53 (DERPSRNRSPRDDSR) and 60–72 (SSDHSPSRNERRS).

The protein belongs to the SepF family. In terms of assembly, homodimer. Interacts with FtsZ.

The protein resides in the cytoplasm. Cell division protein that is part of the divisome complex and is recruited early to the Z-ring. Probably stimulates Z-ring formation, perhaps through the cross-linking of FtsZ protofilaments. Its function overlaps with FtsA. The protein is Cell division protein SepF of Thermobifida fusca (strain YX).